A 276-amino-acid polypeptide reads, in one-letter code: Orotidine 5'-phosphate decarboxylase (276 aa).

Lysine 96 (proton donor) is an active-site residue.

This sequence belongs to the OMP decarboxylase family. Type 2 subfamily.

The enzyme catalyses orotidine 5'-phosphate + H(+) = UMP + CO2. The protein operates within pyrimidine metabolism; UMP biosynthesis via de novo pathway; UMP from orotate: step 2/2. The sequence is that of Orotidine 5'-phosphate decarboxylase from Porphyromonas gingivalis (strain ATCC BAA-308 / W83).